We begin with the raw amino-acid sequence, 308 residues long: MAFLYREPLERPGLVLRELIEKRDIVVAPGVYNPAVALLAERMGFEALYLSGAAITGSLAMPDLGLITLSELAMFTSYITRVVRVPVIVDADTGFGEAINVERTVRELERAGAAAIQIEDQVMPKKCGHLQGKALISPEDMVKKIIAAVGARRDALIVARTDARGVEGFEKAVERAQLYVEAGADIIFPEALTSLEEFREFARRVKAPLLANMTEFGKTPYITVDQFREAGYKIVIFPVTTFRASLKASETVLREIMEKGTQKDILDKLYTRTEFYDLIGYHDYEKRDAEVSRKAEELLARHNNSRTG.

51-53 (SGA) serves as a coordination point for substrate. Mg(2+)-binding residues include aspartate 90 and aspartate 92. Substrate contacts are provided by residues 127-128 (CG), arginine 160, glutamate 190, 212-214 (NMT), arginine 243, and arginine 272.

This sequence belongs to the isocitrate lyase/PEP mutase superfamily. Methylisocitrate lyase family. As to quaternary structure, homotetramer; dimer of dimers. It depends on Mg(2+) as a cofactor.

It carries out the reaction (2S,3R)-3-hydroxybutane-1,2,3-tricarboxylate = pyruvate + succinate. It functions in the pathway organic acid metabolism; propanoate degradation. In terms of biological role, involved in the catabolism of short chain fatty acids (SCFA) via the 2-methylcitrate cycle I (propionate degradation route). Catalyzes the thermodynamically favored C-C bond cleavage of (2R,3S)-2-methylisocitrate to yield pyruvate and succinate via an alpha-carboxy-carbanion intermediate. The sequence is that of 2-methylisocitrate lyase from Aeropyrum pernix (strain ATCC 700893 / DSM 11879 / JCM 9820 / NBRC 100138 / K1).